Reading from the N-terminus, the 178-residue chain is Large ribosomal subunit protein uL6 (178 aa).

The segment at 159 to 178 is disordered; that stretch reads GKGIRYEGEHVRRKEGKTGK.

Belongs to the universal ribosomal protein uL6 family. Part of the 50S ribosomal subunit.

Functionally, this protein binds to the 23S rRNA, and is important in its secondary structure. It is located near the subunit interface in the base of the L7/L12 stalk, and near the tRNA binding site of the peptidyltransferase center. The polypeptide is Large ribosomal subunit protein uL6 (Listeria monocytogenes serotype 4b (strain CLIP80459)).